We begin with the raw amino-acid sequence, 289 residues long: MAGRYDPNPFDEEQVNPFSNPRSAASATNSRPAPLNPDRADYNYGFGPTVDIPLDTSTDGKKKERDLQAKEAELRKREQEVRRKEEAIARAGIVIEEKNWPPFFPIIHHDITNEIPIHLRTLQYVAFFSLLGLVLCLTWNVVSVTAAWIKGEGVKIWFLAIIYFIAGVPGAYALWYRPLYRAFRTDSAIKFGWFFMFYLLHIGFCILAAVAPPIVFKGKSLTGILSAIDVVGDYTLVGIFYFIGFGFFCLETLISIWVIQQVYMHFRGGGKTAEMKREAALGAMGAALR.

Positions 1–65 (MAGRYDPNPF…TSTDGKKKER (65 aa)) are disordered. The Cytoplasmic segment spans residues 1–123 (MAGRYDPNPF…EIPIHLRTLQ (123 aa)). Positions 16-31 (NPFSNPRSAASATNSR) are enriched in polar residues. Residues 59 to 98 (DGKKKERDLQAKEAELRKREQEVRRKEEAIARAGIVIEEK) are a coiled coil. The next 4 helical transmembrane spans lie at 124 to 144 (YVAFFSLLGLVLCLTWNVVSV), 156 to 176 (IWFLAIIYFIAGVPGAYALWY), 191 to 211 (FGWFFMFYLLHIGFCILAAVA), and 239 to 259 (IFYFIGFGFFCLETLISIWVI). Over 260–289 (QQVYMHFRGGGKTAEMKREAALGAMGAALR) the chain is Cytoplasmic.

Belongs to the SCAMP family.

It is found in the cell membrane. The protein resides in the cytoplasmic vesicle. Its subcellular location is the secretory vesicle membrane. Its function is as follows. Probably involved in membrane trafficking. This is Secretory carrier-associated membrane protein (PSAM2) from Pisum sativum (Garden pea).